We begin with the raw amino-acid sequence, 283 residues long: Phosphate import ATP-binding protein PstB (283 aa).

Residues M1 to S20 are compositionally biased toward polar residues. Positions M1–H33 are disordered. Residues Y37 to I278 form the ABC transporter domain. G69–S76 contributes to the ATP binding site.

This sequence belongs to the ABC transporter superfamily. Phosphate importer (TC 3.A.1.7) family. The complex is composed of two ATP-binding proteins (PstB), two transmembrane proteins (PstC and PstA) and a solute-binding protein (PstS).

The protein resides in the cell membrane. It carries out the reaction phosphate(out) + ATP + H2O = ADP + 2 phosphate(in) + H(+). In terms of biological role, part of the ABC transporter complex PstSACB involved in phosphate import. Responsible for energy coupling to the transport system. This Staphylococcus aureus (strain bovine RF122 / ET3-1) protein is Phosphate import ATP-binding protein PstB.